A 335-amino-acid polypeptide reads, in one-letter code: S-adenosylmethionine:tRNA ribosyltransferase-isomerase (335 aa).

It belongs to the QueA family. Monomer.

It is found in the cytoplasm. It catalyses the reaction 7-aminomethyl-7-carbaguanosine(34) in tRNA + S-adenosyl-L-methionine = epoxyqueuosine(34) in tRNA + adenine + L-methionine + 2 H(+). It functions in the pathway tRNA modification; tRNA-queuosine biosynthesis. Transfers and isomerizes the ribose moiety from AdoMet to the 7-aminomethyl group of 7-deazaguanine (preQ1-tRNA) to give epoxyqueuosine (oQ-tRNA). This chain is S-adenosylmethionine:tRNA ribosyltransferase-isomerase, found in Thermotoga petrophila (strain ATCC BAA-488 / DSM 13995 / JCM 10881 / RKU-1).